The following is a 206-amino-acid chain: Probable glutathione S-transferase 8 (206 aa).

Residues 2-79 enclose the GST N-terminal domain; the sequence is VHYKLSYFPI…FLARQFGING (78 aa). Residues tyrosine 8, tryptophan 39, lysine 43, 49-51, and 63-64 contribute to the glutathione site; these read GQL and QS. One can recognise a GST C-terminal domain in the interval 81 to 206; that stretch reads CAWEEAQVNS…WLETRPETQF (126 aa).

The protein belongs to the GST superfamily. Sigma family.

It carries out the reaction RX + glutathione = an S-substituted glutathione + a halide anion + H(+). Its function is as follows. Conjugation of reduced glutathione to a wide number of exogenous and endogenous hydrophobic electrophiles. The chain is Probable glutathione S-transferase 8 (gst-8) from Caenorhabditis elegans.